The sequence spans 158 residues: Transcription elongation factor GreA (158 aa).

It belongs to the GreA/GreB family.

Necessary for efficient RNA polymerase transcription elongation past template-encoded arresting sites. The arresting sites in DNA have the property of trapping a certain fraction of elongating RNA polymerases that pass through, resulting in locked ternary complexes. Cleavage of the nascent transcript by cleavage factors such as GreA or GreB allows the resumption of elongation from the new 3'terminus. GreA releases sequences of 2 to 3 nucleotides. The chain is Transcription elongation factor GreA from Verminephrobacter eiseniae (strain EF01-2).